Reading from the N-terminus, the 517-residue chain is Benzoate 4-monooxygenase bphA (517 aa).

A helical transmembrane segment spans residues 4–24 (LLLSPYGAYLGLALLVLYYLL). Residues Asn282 and Asn325 are each glycosylated (N-linked (GlcNAc...) asparagine). Cys461 is a heme binding site.

Belongs to the cytochrome P450 family. Heme is required as a cofactor.

It localises to the membrane. The catalysed reaction is benzoate + reduced [NADPH--hemoprotein reductase] + O2 = 4-hydroxybenzoate + oxidized [NADPH--hemoprotein reductase] + H2O + H(+). Functionally, cytochrome P450 monooxygenase; part of the benzoic acid degradation pathway also known as the protocatechuic acid pathway. Benzoic acid debradation begins with the conversion of benzoic acid into 4-hydroxybenzoic acid through hydroxylation by the benzoate-4-monooxygenase bphA, and its partner NADPH-cytochrome P450 reductase cprA which act as a mediator in electron donation from NADPH. 4-Hydroxybenzoic acid is then converted into 3,4-dihydroxybenzoic acid (also called protocatechuic acid) by the p-hydroxybenzoate-m-hydroxylase phhA. Protocatechuic acid is converted into 3-carboxy-cis,cis-muconic acid by the intradiol ring-cleavage dioxygenase prcA, which is further metabolized through the 3-oxoadipate pathway to finally enter the tricarboxylic acid cycle (TCA). This chain is Benzoate 4-monooxygenase bphA, found in Aspergillus niger (strain ATCC MYA-4892 / CBS 513.88 / FGSC A1513).